Reading from the N-terminus, the 39-residue chain is Contryphan-Cal1 (39 aa).

Positions 1-20 (MTRTAVLLLTLLFLVAMAAS) are cleaved as a signal peptide. The cysteines at positions 29 and 35 are disulfide-linked.

Expressed by the venom duct.

The protein localises to the secreted. Functionally, probable neurotoxin. The protein is Contryphan-Cal1 of Californiconus californicus (California cone).